A 540-amino-acid chain; its full sequence is Transcription termination/antitermination protein NusA (540 aa).

Residues 144–214 (GQVIEARVED…SMWPITLSRS (71 aa)) form the S1 motif domain. The region spanning 319 to 386 (DTSIEIVVPA…QGIFGIKKRR (68 aa)) is the KH domain. Positions 457–540 (VAAPTPTPAP…KQTFDNFDDL (84 aa)) are disordered. Pro residues predominate over residues 461–489 (TPTPAPQPTPAPTKVEPVPPPVSVTPKPI). Over residues 512–522 (DDSKTKPEKSS) the composition is skewed to basic and acidic residues. A compositionally biased stretch (polar residues) spans 523-540 (AKTNTPQTKQTFDNFDDL).

The protein belongs to the NusA family. Monomer. Binds directly to the core enzyme of the DNA-dependent RNA polymerase and to nascent RNA.

The protein localises to the cytoplasm. Functionally, participates in both transcription termination and antitermination. In Mycoplasma pneumoniae (strain ATCC 29342 / M129 / Subtype 1) (Mycoplasmoides pneumoniae), this protein is Transcription termination/antitermination protein NusA.